We begin with the raw amino-acid sequence, 166 residues long: NAD(P)H-quinone oxidoreductase subunit I, chloroplastic (166 aa).

2 consecutive 4Fe-4S ferredoxin-type domains span residues 55–84 and 95–124; these read GRIHFEFDKCIACEVCVRVCPIDLPVVDWK and LNYSIDFGICIFCGNCVEYCPTNCLSMTEE. Residues C64, C67, C70, C74, C104, C107, C110, and C114 each coordinate [4Fe-4S] cluster.

Belongs to the complex I 23 kDa subunit family. NDH is composed of at least 16 different subunits, 5 of which are encoded in the nucleus. It depends on [4Fe-4S] cluster as a cofactor.

The protein localises to the plastid. It is found in the chloroplast thylakoid membrane. The catalysed reaction is a plastoquinone + NADH + (n+1) H(+)(in) = a plastoquinol + NAD(+) + n H(+)(out). The enzyme catalyses a plastoquinone + NADPH + (n+1) H(+)(in) = a plastoquinol + NADP(+) + n H(+)(out). In terms of biological role, NDH shuttles electrons from NAD(P)H:plastoquinone, via FMN and iron-sulfur (Fe-S) centers, to quinones in the photosynthetic chain and possibly in a chloroplast respiratory chain. The immediate electron acceptor for the enzyme in this species is believed to be plastoquinone. Couples the redox reaction to proton translocation, and thus conserves the redox energy in a proton gradient. This Ambrosia trifida (Giant ragweed) protein is NAD(P)H-quinone oxidoreductase subunit I, chloroplastic.